Here is a 495-residue protein sequence, read N- to C-terminus: Transcription termination/antitermination protein NusA (495 aa).

The 66-residue stretch at 135–200 (GKIVTGTVKK…KTAQLFVTRS (66 aa)) folds into the S1 motif domain. The region spanning 302–374 (NHSMDIAVEA…LDEEFAQILV (73 aa)) is the KH domain.

This sequence belongs to the NusA family. Monomer. Binds directly to the core enzyme of the DNA-dependent RNA polymerase and to nascent RNA.

It is found in the cytoplasm. In terms of biological role, participates in both transcription termination and antitermination. This Haemophilus influenzae (strain ATCC 51907 / DSM 11121 / KW20 / Rd) protein is Transcription termination/antitermination protein NusA.